The primary structure comprises 421 residues: UDP-N-acetylglucosamine 1-carboxyvinyltransferase (421 aa).

Residue 22–23 (KN) participates in phosphoenolpyruvate binding. Residue Arg93 participates in UDP-N-acetyl-alpha-D-glucosamine binding. The active-site Proton donor is the Cys117. Position 117 is a 2-(S-cysteinyl)pyruvic acid O-phosphothioketal (Cys117). UDP-N-acetyl-alpha-D-glucosamine-binding positions include 122-126 (RPVDL), Asp308, and Leu330.

The protein belongs to the EPSP synthase family. MurA subfamily.

Its subcellular location is the cytoplasm. It carries out the reaction phosphoenolpyruvate + UDP-N-acetyl-alpha-D-glucosamine = UDP-N-acetyl-3-O-(1-carboxyvinyl)-alpha-D-glucosamine + phosphate. The protein operates within cell wall biogenesis; peptidoglycan biosynthesis. Cell wall formation. Adds enolpyruvyl to UDP-N-acetylglucosamine. This is UDP-N-acetylglucosamine 1-carboxyvinyltransferase from Helicobacter hepaticus (strain ATCC 51449 / 3B1).